The sequence spans 690 residues: Elongation factor G (690 aa).

In terms of domain architecture, tr-type G spans 8-283 (EDYRNFGIMA…AVVDYLPSPL (276 aa)). GTP-binding positions include 17–24 (AHIDAGKT), 81–85 (DTPGH), and 135–138 (NKMD).

This sequence belongs to the TRAFAC class translation factor GTPase superfamily. Classic translation factor GTPase family. EF-G/EF-2 subfamily.

The protein resides in the cytoplasm. In terms of biological role, catalyzes the GTP-dependent ribosomal translocation step during translation elongation. During this step, the ribosome changes from the pre-translocational (PRE) to the post-translocational (POST) state as the newly formed A-site-bound peptidyl-tRNA and P-site-bound deacylated tRNA move to the P and E sites, respectively. Catalyzes the coordinated movement of the two tRNA molecules, the mRNA and conformational changes in the ribosome. The polypeptide is Elongation factor G (Bradyrhizobium sp. (strain BTAi1 / ATCC BAA-1182)).